The sequence spans 357 residues: Non-structural protein NS2 (357 aa).

Disordered regions lie at residues 163 to 199 and 228 to 267; these read NERE…AREM and LDEK…PKTH. 2 stretches are compositionally biased toward acidic residues: residues 230–241 and 250–260; these read EKDEEDGDERED and DDDEQGEDASD.

Belongs to the orbivirus non-structural protein NS2 family.

Single-stranded RNA-binding protein. This is Non-structural protein NS2 (Segment-8) from Antilocapra americana (Pronghorn).